A 105-amino-acid chain; its full sequence is Small ribosomal subunit protein uS10 (105 aa).

The protein belongs to the universal ribosomal protein uS10 family. In terms of assembly, part of the 30S ribosomal subunit.

Functionally, involved in the binding of tRNA to the ribosomes. This is Small ribosomal subunit protein uS10 from Aster yellows witches'-broom phytoplasma (strain AYWB).